Consider the following 373-residue polypeptide: tRNA-specific 2-thiouridylase MnmA (373 aa).

ATP contacts are provided by residues 12 to 19 (GMSGGVDS) and Met38. Positions 98–100 (NPD) are interaction with target base in tRNA. Residue Cys103 is the Nucleophile of the active site. The cysteines at positions 103 and 200 are disulfide-linked. An ATP-binding site is contributed by Gly127. Residues 150–152 (KDQ) are interaction with tRNA. Cys200 acts as the Cysteine persulfide intermediate in catalysis. The interval 312–313 (RY) is interaction with tRNA.

The protein belongs to the MnmA/TRMU family.

Its subcellular location is the cytoplasm. The catalysed reaction is S-sulfanyl-L-cysteinyl-[protein] + uridine(34) in tRNA + AH2 + ATP = 2-thiouridine(34) in tRNA + L-cysteinyl-[protein] + A + AMP + diphosphate + H(+). Catalyzes the 2-thiolation of uridine at the wobble position (U34) of tRNA, leading to the formation of s(2)U34. The sequence is that of tRNA-specific 2-thiouridylase MnmA from Streptococcus pneumoniae (strain ATCC 700669 / Spain 23F-1).